A 132-amino-acid chain; its full sequence is MCDAFVGTWKLVSSENFDDYMKEVGVGFATRKVAGMAKPNLIISVEGDLVVIRSESTFKNTEISFKLGVEFDEITPDDRKVKSIITLDGGVLVHVQKWDGKSTTIKKRRDGDKLVVECVMKGVTSTRVYERA.

N-acetylcysteine is present on Cys-2. At Ser-13 the chain carries Phosphoserine. Tyr-20 is subject to Phosphotyrosine; by Tyr-kinases. Residues 22–32 carry the Nuclear localization signal motif; sequence KEVGVGFATRK. 127 to 129 provides a ligand contact to a fatty acid; that stretch reads RVY.

The protein belongs to the calycin superfamily. Fatty-acid binding protein (FABP) family. As to quaternary structure, monomer. Homodimer. Interacts with PPARG.

It localises to the cytoplasm. The protein localises to the nucleus. Functionally, lipid transport protein in adipocytes. Binds both long chain fatty acids and retinoic acid. Delivers long-chain fatty acids and retinoic acid to their cognate receptors in the nucleus. The chain is Fatty acid-binding protein, adipocyte (Fabp4) from Rattus norvegicus (Rat).